The chain runs to 431 residues: Serine--tRNA ligase (431 aa).

237 to 239 (TAE) is a binding site for L-serine. 268 to 270 (RSE) provides a ligand contact to ATP. Glu291 serves as a coordination point for L-serine. 355 to 358 (EISS) is an ATP binding site. Ser390 provides a ligand contact to L-serine.

The protein belongs to the class-II aminoacyl-tRNA synthetase family. Type-1 seryl-tRNA synthetase subfamily. In terms of assembly, homodimer. The tRNA molecule binds across the dimer.

It is found in the cytoplasm. It catalyses the reaction tRNA(Ser) + L-serine + ATP = L-seryl-tRNA(Ser) + AMP + diphosphate + H(+). The catalysed reaction is tRNA(Sec) + L-serine + ATP = L-seryl-tRNA(Sec) + AMP + diphosphate + H(+). The protein operates within aminoacyl-tRNA biosynthesis; selenocysteinyl-tRNA(Sec) biosynthesis; L-seryl-tRNA(Sec) from L-serine and tRNA(Sec): step 1/1. Catalyzes the attachment of serine to tRNA(Ser). Is also able to aminoacylate tRNA(Sec) with serine, to form the misacylated tRNA L-seryl-tRNA(Sec), which will be further converted into selenocysteinyl-tRNA(Sec). The chain is Serine--tRNA ligase from Neisseria meningitidis serogroup C (strain 053442).